A 229-amino-acid polypeptide reads, in one-letter code: Large ribosomal subunit protein uL1 (229 aa).

The protein belongs to the universal ribosomal protein uL1 family. In terms of assembly, part of the 50S ribosomal subunit.

In terms of biological role, binds directly to 23S rRNA. The L1 stalk is quite mobile in the ribosome, and is involved in E site tRNA release. Functionally, protein L1 is also a translational repressor protein, it controls the translation of the L11 operon by binding to its mRNA. This Streptococcus pneumoniae (strain ATCC 700669 / Spain 23F-1) protein is Large ribosomal subunit protein uL1.